The following is a 453-amino-acid chain: MAKKKATFICQECGYQSPKYLGRCPNCSAWSSFVEEVEVKEVKNARVSLAGEKSRPVKLKDVDNISYHRTQTDMSEFNRVLGGGVVPGSLILIGGDPGIGKSTLLLQVSTQLANKGTVLYVSGEESAEQIKLRSERLGDIDNEFYLYAETNMQAIRTEIENIKPDFLIIDSIQTIMSPDITGVQGSVSQVREVTAELMQLAKTNNIATFIVGHVTKEGTLAGPRMLEHMVDTVLYFEGERHHTFRILRAVKNRFGSTNEIGIFEMQSGGLVEVLNPSQVFLEERLDGATGSAVVVTMEGSRPILAEVQSLVTPTVFGNARRTTTGLDFNRVSLIMAVLEKRCGLLLQNQDAYLKSAGGVKLDEPAIDLAVAVAIASSYKEKPTSPQEAFLGEIGLTGEIRRVTRIEQRINEAAKLGFTKVYAPKNALQGIDIPQGIEVVGVTTVGQVLNAVFS.

Residues cysteine 10–cysteine 27 form a C4-type zinc finger. Glycine 95–serine 102 contributes to the ATP binding site. Positions lysine 251 to glycine 255 match the RadA KNRFG motif motif. The lon-protease-like stretch occupies residues aspartate 350 to serine 453.

Belongs to the RecA family. RadA subfamily.

DNA-dependent ATPase involved in processing of recombination intermediates, plays a role in repairing DNA breaks. Stimulates the branch migration of RecA-mediated strand transfer reactions, allowing the 3' invading strand to extend heteroduplex DNA faster. Binds ssDNA in the presence of ADP but not other nucleotides, has ATPase activity that is stimulated by ssDNA and various branched DNA structures, but inhibited by SSB. Does not have RecA's homology-searching function. The chain is DNA repair protein RadA from Streptococcus pyogenes serotype M1.